The primary structure comprises 102 residues: Vacuolar ATPase assembly integral membrane protein VMA21 (102 aa).

Topologically, residues 1-30 (MERYDKATLNAAFAPEFRQNEGSLTSTLRT) are cytoplasmic. The chain crosses the membrane as a helical span at residues 31–51 (LLFFTALMITLPVGLYFSSKA). Residues 52–66 (YIFEGTLGMSNRDSY) are Lumenal-facing. A helical transmembrane segment spans residues 67-87 (FYAAIVAVVTVHVVLAMFVYV). The Cytoplasmic portion of the chain corresponds to 88–102 (AWSEGTRQWREGKQD).

The protein belongs to the VMA21 family. Associates with the V0 complex of the vacuolar ATPase (V-ATPase). Interacts with ATP6AP2.

It localises to the endoplasmic reticulum membrane. The protein localises to the endoplasmic reticulum-Golgi intermediate compartment membrane. It is found in the cytoplasmic vesicle. The protein resides in the COPII-coated vesicle membrane. In terms of biological role, required for the assembly of the V0 complex of the vacuolar ATPase (V-ATPase) in the endoplasmic reticulum. This chain is Vacuolar ATPase assembly integral membrane protein VMA21, found in Gallus gallus (Chicken).